A 346-amino-acid chain; its full sequence is NADH-ubiquinone oxidoreductase chain 2 (346 aa).

Transmembrane regions (helical) follow at residues 1–21 (MNPH…TITI), 25–45 (HWVL…PLIS), 60–80 (FLTQ…NAWA), 95–115 (CLLL…HFWF), 124–144 (LMTA…LLLM), 149–169 (LNPA…GWMG), 178–195 (ILAF…IILV), 200–219 (LALL…FMAL), 242–262 (ATLM…GFMP), 274–294 (EMTP…FFYL), and 326–346 (AILA…HAIV).

Belongs to the complex I subunit 2 family.

It is found in the mitochondrion inner membrane. The enzyme catalyses a ubiquinone + NADH + 5 H(+)(in) = a ubiquinol + NAD(+) + 4 H(+)(out). Its function is as follows. Core subunit of the mitochondrial membrane respiratory chain NADH dehydrogenase (Complex I) that is believed to belong to the minimal assembly required for catalysis. Complex I functions in the transfer of electrons from NADH to the respiratory chain. The immediate electron acceptor for the enzyme is believed to be ubiquinone. This Mareca americana (American wigeon) protein is NADH-ubiquinone oxidoreductase chain 2 (MT-ND2).